The following is a 151-amino-acid chain: Lipoprotein signal peptidase (151 aa).

The next 3 membrane-spanning stretches (helical) occupy residues 3 to 23 (LYII…GWIV), 59 to 79 (WFFY…FYTS), and 85 to 107 (LYRI…RLHL). Catalysis depends on residues aspartate 112 and aspartate 128. A helical membrane pass occupies residues 123–143 (IFNVADTALTCGVICVFIAIL).

The protein belongs to the peptidase A8 family.

The protein resides in the cell membrane. It catalyses the reaction Release of signal peptides from bacterial membrane prolipoproteins. Hydrolyzes -Xaa-Yaa-Zaa-|-(S,diacylglyceryl)Cys-, in which Xaa is hydrophobic (preferably Leu), and Yaa (Ala or Ser) and Zaa (Gly or Ala) have small, neutral side chains.. It functions in the pathway protein modification; lipoprotein biosynthesis (signal peptide cleavage). Functionally, this protein specifically catalyzes the removal of signal peptides from prolipoproteins. This Latilactobacillus sakei subsp. sakei (strain 23K) (Lactobacillus sakei subsp. sakei) protein is Lipoprotein signal peptidase.